Reading from the N-terminus, the 145-residue chain is MYLNSLSNSVYKKRSKKRICRGIGSGWGKTGGRGHKGQKSRSGGKIRKSFEGGQTPLYRRIPKFGFRSKKKKFFDEIRLFELDCFHNLKYINLSILKKINLINKNIKYVKIIKSGLINRPIIISGLSVTKGARLCIESAGGVVKS.

A disordered region spans residues 23–51 (IGSGWGKTGGRGHKGQKSRSGGKIRKSFE). The segment covering 32-47 (GRGHKGQKSRSGGKIR) has biased composition (basic residues).

Belongs to the universal ribosomal protein uL15 family. As to quaternary structure, part of the 50S ribosomal subunit.

In terms of biological role, binds to the 23S rRNA. The polypeptide is Large ribosomal subunit protein uL15 (Buchnera aphidicola subsp. Cinara cedri (strain Cc)).